Reading from the N-terminus, the 974-residue chain is Leucine-rich repeat receptor-like kinase protein SUNN (974 aa).

The N-terminal stretch at 1-20 (MKNITCYLLLLCMLFTTCYS) is a signal peptide. N-linked (GlcNAc...) asparagine glycans are attached at residues N75, N104, N123, and N136. LRR repeat units follow at residues 92 to 116 (LNML…LSKL), 117 to 141 (TSLR…TFGM), 143 to 165 (KLEA…IVSL), 166 to 188 (MKLK…SYSE), 189 to 213 (FQKL…LSKL), 238 to 262 (IKSL…LGNL), 263 to 286 (ENLD…LSSM), 288 to 309 (SLMS…TFSK), 310 to 334 (LKNL…IGDL), 335 to 358 (PNLE…LGSN), 360 to 382 (KFIY…LCKS), 383 to 406 (KKLK…IGPC), 407 to 430 (KSLE…IFQL), 431 to 454 (PSVQ…ISGN), 456 to 477 (LGNL…MKNL), 478 to 501 (RSLQ…VFAL), 503 to 525 (VLTR…VTQC), 527 to 549 (SLTA…MKNL), 550 to 573 (KVLS…IRFM), and 574 to 598 (TSLT…QFLV). 2 N-linked (GlcNAc...) asparagine glycosylation sites follow: N250 and N274. N312 and N346 each carry an N-linked (GlcNAc...) asparagine glycan. Residues N508 and N513 are each glycosylated (N-linked (GlcNAc...) asparagine). N-linked (GlcNAc...) asparagine glycans are attached at residues N556 and N585. The helical transmembrane segment at 635-655 (VVIAIVFATAVLMVIVTLHMM) threads the bilayer. In terms of domain architecture, Protein kinase spans 685–972 (LKEENIIGKG…PPHSTSHNLI (288 aa)). ATP-binding positions include 691 to 699 (IGKGGAGIV) and K713. D810 functions as the Proton acceptor in the catalytic mechanism.

This sequence belongs to the protein kinase superfamily. Ser/Thr protein kinase family. As to expression, expressed in roots and shoots. Expressed in the vasculature of leaves, petioles, stems and roots.

It localises to the cell membrane. The enzyme catalyses L-seryl-[protein] + ATP = O-phospho-L-seryl-[protein] + ADP + H(+). It carries out the reaction L-threonyl-[protein] + ATP = O-phospho-L-threonyl-[protein] + ADP + H(+). Functionally, LRR receptor kinase involved in the regulation of root growth and root nodule organogenesis. Involved in long distance nodulation signaling events. Involved in the autoregulation of nodulation (AON), a long distance systemic signaling from root to shoot and back again, which allows legumes to limit the number of root nodules formed based on available nitrogen and previous rhizobial colonization. Acts from shoot to root to control AON. Interacts with CLE12 and CLE13 signaling to control nodule numbers. Required for the modulation of shoot-to-root auxin transport in response to altered nitrogen tissue concentrations and in the absence of rhizobia. Shoot-to-root auxin transport influences lateral root density and length. Involved in the regulation of root colonization by arbuscular mycorrhizal (AM) fungi. Interacts with CLE33 and CL53 signaling to repress strigolactone biosynthetic genes and strigolactone content in the roots, and consequently reduces the promotion of further colonization by AM fungi. The protein is Leucine-rich repeat receptor-like kinase protein SUNN of Medicago truncatula (Barrel medic).